The following is a 353-amino-acid chain: N-methyltransferase (353 aa).

S-adenosyl-L-homocysteine-binding residues include Ser171, Ala195, Asp218, Asp238, and Lys252. Residue Asp218 participates in S-adenosyl-L-methionine binding.

The protein belongs to the class I-like SAM-binding methyltransferase superfamily. Cation-independent O-methyltransferase family. As to quaternary structure, homodimer. Expressed at high levels in all tissues.

It carries out the reaction 3-methoxytyramine + S-adenosyl-L-methionine = N-methyl-3-methoxytyramine + S-adenosyl-L-homocysteine + H(+). It catalyses the reaction mescaline + S-adenosyl-L-methionine = N-methylmescaline + S-adenosyl-L-homocysteine + H(+). The enzyme catalyses tyramine + S-adenosyl-L-methionine = N-methyltyramine + S-adenosyl-L-homocysteine + H(+). The catalysed reaction is 4-hydroxy-3,5-dimethoxyphenethylamine + S-adenosyl-L-methionine = N-methyl-4-hydroxy-3,5-dimethoxyphenethylamine + S-adenosyl-L-homocysteine + H(+). It participates in aromatic compound metabolism. It functions in the pathway alkaloid biosynthesis. In terms of biological role, N-methyltransferase participating in the biosynthesis of natural products derived from phenylethylamine, including mescaline, a natural hallucinogen potentially used in psychotherapeutic treatments. Catalyzes the N-methylation of many substrates, including 3-methoxytyramine, 5-hydroxy-3,4-dimethoxyphenethylamine, 4-hydroxy-3,5-dimethoxyphenethylamine, tyramine and mescaline. The polypeptide is N-methyltransferase (Lophophora williamsii (Peyote)).